Here is a 268-residue protein sequence, read N- to C-terminus: UPF0294 protein ETA_26410 (268 aa).

The protein belongs to the UPF0294 family.

The protein resides in the cytoplasm. The sequence is that of UPF0294 protein ETA_26410 from Erwinia tasmaniensis (strain DSM 17950 / CFBP 7177 / CIP 109463 / NCPPB 4357 / Et1/99).